The chain runs to 136 residues: Protein PsiE (136 aa).

The next 4 membrane-spanning stretches (helical) occupy residues 15–35, 55–75, 82–102, and 108–128; these read ILQT…VVFL, YELV…ALIV, FHFP…RLII, and PLDV…LWLC.

This sequence belongs to the PsiE family.

It is found in the cell inner membrane. In Escherichia coli O17:K52:H18 (strain UMN026 / ExPEC), this protein is Protein PsiE.